The chain runs to 1346 residues: Adhesion G protein-coupled receptor F5 (1346 aa).

Positions Met-1–Ala-21 are cleaved as a signal peptide. Residues Ala-22 to Ser-1006 lie on the Extracellular side of the membrane. Asn-73, Asn-94, Asn-106, Asn-188, Asn-256, Asn-272, Asn-301, Asn-315, Asn-328, Asn-398, Asn-472, Asn-487, Asn-505, Asn-540, Asn-627, Asn-649, Asn-666, Asn-820, Asn-931, Asn-963, and Asn-982 each carry an N-linked (GlcNAc...) asparagine glycan. One can recognise an SEA domain in the interval Leu-166–Glu-273. Ig-like domains follow at residues Gln-267 to Met-368, Pro-369 to Thr-466, and Ala-471 to Ile-561. 2 cysteine pairs are disulfide-bonded: Cys-293–Cys-350 and Cys-391–Cys-449. The cysteines at positions 492 and 545 are disulfide-linked. Residues Pro-842–Asp-1003 form the GAIN-B domain. 2 cysteine pairs are disulfide-bonded: Cys-954–Cys-985 and Cys-973–Cys-987. The interval Cys-954–Asp-1003 is GPS. Positions Thr-991–Ser-1006 are tethered agonist. A helical transmembrane segment spans residues Leu-1007–Leu-1027. Over Ala-1028–Cys-1053 the chain is Cytoplasmic. A helical transmembrane segment spans residues Ile-1054–Ile-1074. Topologically, residues Gln-1075 to Thr-1090 are extracellular. Residues Phe-1091–Leu-1111 traverse the membrane as a helical segment. Residues Phe-1112–Lys-1128 are Cytoplasmic-facing. Residues Ala-1129–Ala-1149 traverse the membrane as a helical segment. Residues Thr-1150–Leu-1173 are Extracellular-facing. Residues Ala-1174–Ile-1194 form a helical membrane-spanning segment. The Cytoplasmic segment spans residues Thr-1195–Ser-1220. A helical membrane pass occupies residues Ile-1221 to Pro-1241. Over Gly-1242–Asn-1244 the chain is Extracellular. The helical transmembrane segment at Leu-1245 to Phe-1265 threads the bilayer. The Cytoplasmic segment spans residues Gly-1266–Asn-1346. Phosphothreonine is present on Thr-1300. Ser-1307 carries the phosphoserine modification. Residues Thr-1327–Asn-1346 form a disordered region. The segment covering Glu-1329–Asn-1346 has biased composition (low complexity).

Belongs to the G-protein coupled receptor 2 family. Adhesion G-protein coupled receptor (ADGR) subfamily. Homodimer; disulfide-linked. Heterodimer of 2 chains generated by proteolytic processing; the large extracellular N-terminal fragment and the membrane-bound C-terminal fragment predominantly remain associated and non-covalently linked. Fragment generates by the processing enzyme furin remains attached to the extracellular N-terminal fragment. Interacts (via N-terminal extracellular domain) with SFTPD. Highly glycosylated. Post-translationally, proteolytically cleaved at multiple sites: one in the GPS region of the GAIN-B domain (S1 site) and the other in the SEA domain (S2 site). The proteolytic cleavage at S1 site generates an extracellular subunit and a seven-transmembrane subunit. The proteolytic cleavage at S2 site generates a fragment that undergoes proteolytic cleavage by the processing enzyme furin. Expressed in lung endothelial cells and in alveolar type II (ATII) cells (at protein level). Expressed high levels in subcutaneous adipose tissue in lean individuals and at lower levels in visceral fat. Expression levels in subcutaneous adipose tissue drastically drop in obese individuals.

The protein resides in the cell membrane. As an adhesion G protein-coupled receptor (aGPCR) exhibits a large N-terminal extracellular domain containing highly conserved GPCR autoproteolysis-inducing (GAIN) domain. During synthesis, intracellular autoproteolytic processing of nascent chain within the GAIN domain generates a mature protein, consisting of an N-terminal fragment that is non-covalently linked to the C-terminal fragment. The mature protein is routed to the plasma membrane where the N- and C-terminal fragments remain associated, forming the holoreceptor. Dissociation of the aGPCR fragments stimulates G protein signaling through the action of the tethered-peptide agonist stalk that is occluded within the GAIN domain in the holoreceptor form. This dissociation might be induced by ligand binding, such as that of sFNDC4. Adhesion G protein-coupled receptor. In alveolar type II (ATII or AT2) cells, required for normal lung surfactant homeostasis. Modulation of both surfactant secretion and uptake by ATII cells is mediated by the downstream activation of GNAQ/GNA11 proteins and may be a consequence of increased cortical F-actin assembly induced by ADGRF5 activation. In the kidney, may play a role in the regulation of acid excretion into the primary urine, possibly by regulating the surface expression of V-ATPase proton pump. As a receptor for soluble FNDC4 (sFNDC4), required for proper systemic glucose tolerance, specifically sensitizing white adipose tissue to insulin. Also plays a role in sFNDC4-induced decrease of local inflammation in white adipose tissue. This is Adhesion G protein-coupled receptor F5 from Homo sapiens (Human).